The following is a 187-amino-acid chain: Protein TIFY 11b (187 aa).

Positions Ala68–Ser103 constitute a Tify domain. The short motif at Pro121–Tyr145 is the Jas element. A Nuclear localization signal motif is present at residues Met123 to Arg130. Residues Leu139–Leu168 are disordered. The segment covering Lys154–Thr163 has biased composition (basic and acidic residues).

The protein belongs to the TIFY/JAZ family. As to quaternary structure, interacts with COI1B in a coronatine-dependent manner. Coronatine is an analog of jasmonoyl isoleucine (JA-Ile). In terms of processing, ubiquitinated. Targeted for degradation by the SCF(COI1) E3 ubiquitin ligase-proteasome pathway during jasmonate signaling.

It localises to the nucleus. Repressor of jasmonate responses. In Oryza sativa subsp. japonica (Rice), this protein is Protein TIFY 11b.